A 720-amino-acid chain; its full sequence is Nucleolar protein 11 (720 aa).

The segment at 365–392 (KDPETKPSNAGAQKKTRERKTNANAGNG) is disordered.

It is found in the nucleus. It localises to the nucleolus. Ribosome biogenesis factor. May be required for both optimal rDNA transcription and pre-rRNA processing. The protein is Nucleolar protein 11 (nol11) of Xenopus laevis (African clawed frog).